We begin with the raw amino-acid sequence, 142 residues long: Large ribosomal subunit protein uL13 (142 aa).

The protein belongs to the universal ribosomal protein uL13 family. As to quaternary structure, part of the 50S ribosomal subunit.

Functionally, this protein is one of the early assembly proteins of the 50S ribosomal subunit, although it is not seen to bind rRNA by itself. It is important during the early stages of 50S assembly. This is Large ribosomal subunit protein uL13 from Vesicomyosocius okutanii subsp. Calyptogena okutanii (strain HA).